A 508-amino-acid polypeptide reads, in one-letter code: Lysine--tRNA ligase (508 aa).

2 residues coordinate Mg(2+): E403 and E410.

This sequence belongs to the class-II aminoacyl-tRNA synthetase family. In terms of assembly, homodimer. Mg(2+) is required as a cofactor.

It localises to the cytoplasm. It catalyses the reaction tRNA(Lys) + L-lysine + ATP = L-lysyl-tRNA(Lys) + AMP + diphosphate. This is Lysine--tRNA ligase from Methanoculleus marisnigri (strain ATCC 35101 / DSM 1498 / JR1).